Reading from the N-terminus, the 231-residue chain is MYLMPPLIPAVLIRRYQRFLADFQLENGEIVTAHCPNSGSMKGCAVPGSPAFISRCDKPGRKLCYTWEQVKADNCWIGINTSLPNRLVHNAIESNVIKELQGYHSIRPEVRYGINSRIDLLLSRGDELCYVEVKNVTLMEDGRALFPDAATVRGQKHLRELMEMVRLGHRAVNFFVVQRPDCSSVSPADAIDPEYGRLLRLAAANGVELLAYQAQVSRETIHLTHRLPVIL.

It belongs to the SfsA family.

This is Sugar fermentation stimulation protein homolog from Geotalea daltonii (strain DSM 22248 / JCM 15807 / FRC-32) (Geobacter daltonii).